The primary structure comprises 227 residues: Cytidylate kinase (227 aa).

Gly-12–Thr-20 contributes to the ATP binding site.

The protein belongs to the cytidylate kinase family. Type 1 subfamily.

It is found in the cytoplasm. The catalysed reaction is CMP + ATP = CDP + ADP. It carries out the reaction dCMP + ATP = dCDP + ADP. This chain is Cytidylate kinase, found in Nitrosococcus oceani (strain ATCC 19707 / BCRC 17464 / JCM 30415 / NCIMB 11848 / C-107).